Reading from the N-terminus, the 224-residue chain is Peroxiredoxin-6 (224 aa).

Residues 5–169 (LLLGDEAPNF…ILRVIISLQL (165 aa)) enclose the Thioredoxin domain. Residues 31–40 (DSWGILFSHP) are required and sufficient for targeting to lysosomes and lamellar bodies. Thr-44 is modified (phosphothreonine). Cys-47 serves as the catalytic Cysteine sulfenic acid (-SOH) intermediate; for peroxidase activity. The residue at position 63 (Lys-63) is an N6-acetyllysine. Tyr-89 carries the phosphotyrosine modification. Asp-140 functions as the For phospholipase activity in the catalytic mechanism. Thr-177 is modified (phosphothreonine; by MAPK). Lys-209 carries the N6-acetyllysine; alternate modification. Lys-209 is subject to N6-succinyllysine; alternate.

The protein belongs to the peroxiredoxin family. Prx6 subfamily. In terms of assembly, homodimer. Interacts with GSTP1; mediates PRDX6 glutathionylation and regeneration. Interacts with APEX1. Interacts with STH. May interact with FAM168B. May interact with HTR2A. Requires Does not need Ca(2+) as cofactor. as cofactor. Irreversibly inactivated by overoxidation of Cys-47 to sulfinic acid (Cys-SO(2)H) and sulfonic acid (Cys-SO(3)H) forms upon oxidative stress. In terms of processing, phosphorylation at Thr-177 by MAP kinases increases the phospholipase activity of the enzyme. The phosphorylated form exhibits a greater lysophosphatidylcholine acyltransferase activity compared to the non-phosphorylated form.

The protein resides in the cytoplasm. Its subcellular location is the lysosome. The enzyme catalyses a hydroperoxide + 2 glutathione = an alcohol + glutathione disulfide + H2O. The catalysed reaction is a 1,2-diacyl-sn-glycero-3-phosphocholine + H2O = a 1-acyl-sn-glycero-3-phosphocholine + a fatty acid + H(+). It catalyses the reaction a 1-acyl-sn-glycero-3-phosphocholine + an acyl-CoA = a 1,2-diacyl-sn-glycero-3-phosphocholine + CoA. It carries out the reaction 1-hexadecanoyl-sn-glycero-3-phosphocholine + hexadecanoyl-CoA = 1,2-dihexadecanoyl-sn-glycero-3-phosphocholine + CoA. The enzyme catalyses 1,2-dihexadecanoyl-sn-glycero-3-phosphocholine + H2O = 1-hexadecanoyl-sn-glycero-3-phosphocholine + hexadecanoate + H(+). Thiol-specific peroxidase that catalyzes the reduction of hydrogen peroxide and organic hydroperoxides to water and alcohols, respectively. Can reduce H(2)O(2) and short chain organic, fatty acid, and phospholipid hydroperoxides. Also has phospholipase activity, and can therefore either reduce the oxidized sn-2 fatty acyl group of phospholipids (peroxidase activity) or hydrolyze the sn-2 ester bond of phospholipids (phospholipase activity). These activities are dependent on binding to phospholipids at acidic pH and to oxidized phospholipds at cytosolic pH. Plays a role in cell protection against oxidative stress by detoxifying peroxides and in phospholipid homeostasis. Exhibits acyl-CoA-dependent lysophospholipid acyltransferase which mediates the conversion of lysophosphatidylcholine (1-acyl-sn-glycero-3-phosphocholine or LPC) into phosphatidylcholine (1,2-diacyl-sn-glycero-3-phosphocholine or PC). Shows a clear preference for LPC as the lysophospholipid and for palmitoyl CoA as the fatty acyl substrate. This Bos taurus (Bovine) protein is Peroxiredoxin-6 (PRDX6).